Here is a 120-residue protein sequence, read N- to C-terminus: Secreted effector PIT2 (120 aa).

The N-terminal stretch at 1–25 is a signal peptide; that stretch reads MLFRSAFVLLIVAFASACLVQHVQA. Positions 46-59 are PID14 protease inhibitor domain; the sequence is KLNRRWWFGFTGSL.

In terms of assembly, interacts with host cysteine proteases CP1A, CP1B, XCP2 and CP2. In terms of processing, cleaved by host target papain-like cysteine proteases (PLCPs) to release the embedded inhibitor peptide PID14.

The protein localises to the secreted. Its function is as follows. Secreted effector required for virulence. Functions as an inhibitor of a set of apoplastic maize papain-like cysteine proteases (PLCPs) including CP1A, CP1B, XCP2 and CP2, whose activity is directly linked with salicylic-acid-associated plant defenses. Acts as a substrate mimicking molecule for apoplastic PLCPs and its processing releases the embedded inhibitor peptide PID14, which in turn blocks PLCPs to modulate host immunity. The protein is Secreted effector PIT2 of Mycosarcoma maydis (Corn smut fungus).